A 337-amino-acid chain; its full sequence is Visual pigment-like receptor peropsin (337 aa).

Residues 1–26 (MLRNNLGNSSDSKNEDGSVFSQTEHN) lie on the Extracellular side of the membrane. Asn8 carries an N-linked (GlcNAc...) asparagine glycan. A helical membrane pass occupies residues 27–49 (IVATYLIMAGMISIISNIIVLGI). Over 50–61 (FIKYKELRTPTN) the chain is Cytoplasmic. The helical transmembrane segment at 62 to 87 (AIIINLAVTDIGVSSIGYPMSAASDL) threads the bilayer. Topologically, residues 88–101 (YGSWKFGYAGCQVY) are extracellular. The cysteines at positions 98 and 175 are disulfide-linked. The chain crosses the membrane as a helical span at residues 102 to 121 (AGLNIFFGMASIGLLTVVAV). Residues 122–140 (DRYLTICLPDVGRRMTTNT) are Cytoplasmic-facing. Residues 141–164 (YIGLILGAWINGLFWALMPIIGWA) traverse the membrane as a helical segment. Topologically, residues 165–188 (SYAPDPTGATCTINWRKNDRSFVS) are extracellular. A helical membrane pass occupies residues 189–212 (YTMTVIAINFIVPLTVMFYCYYHV). Residues 213–240 (TLSIKHHTTSDCTESLNRDWSDQIDVTK) lie on the Cytoplasmic side of the membrane. A helical transmembrane segment spans residues 241-264 (MSVIMICMFLVAWSPYSIVCLWAS). Over 265 to 272 (FGDPKKIP) the chain is Extracellular. A helical membrane pass occupies residues 273–297 (PPMAIIAPLFAKSSTFYNPCIYVVA). An N6-(retinylidene)lysine modification is found at Lys284. Residues 298-337 (NKKFRRAMLAMFKCQTHQTMPVTSILPMDVSQNPLASGRI) lie on the Cytoplasmic side of the membrane.

Belongs to the G-protein coupled receptor 1 family. Opsin subfamily. As to expression, found only in the eye, where it is localized to the retinal pigment epithelium (RPE). In the RPE, it is localized to the microvilli that surround the photoreceptor outer segments.

The protein localises to the membrane. Functionally, may play a role in rpe physiology either by detecting light directly or by monitoring the concentration of retinoids or other photoreceptor-derived compounds. This chain is Visual pigment-like receptor peropsin (RRH), found in Homo sapiens (Human).